A 395-amino-acid chain; its full sequence is Putative pyridoxal phosphate-dependent acyltransferase (395 aa).

110-111 (GF) is a pyridoxal 5'-phosphate binding site. Residue His-135 coordinates substrate. Pyridoxal 5'-phosphate is bound by residues Ser-185, 210 to 213 (DDAH), and 240 to 243 (TLSK). Lys-243 carries the post-translational modification N6-(pyridoxal phosphate)lysine. Residue Thr-357 coordinates substrate.

It belongs to the class-II pyridoxal-phosphate-dependent aminotransferase family. Homodimer. The cofactor is pyridoxal 5'-phosphate.

The polypeptide is Putative pyridoxal phosphate-dependent acyltransferase (Staphylococcus aureus (strain COL)).